A 98-amino-acid chain; its full sequence is Cell division topological specificity factor (98 aa).

It belongs to the MinE family.

Its function is as follows. Prevents the cell division inhibition by proteins MinC and MinD at internal division sites while permitting inhibition at polar sites. This ensures cell division at the proper site by restricting the formation of a division septum at the midpoint of the long axis of the cell. The polypeptide is Cell division topological specificity factor (Nitrosomonas eutropha (strain DSM 101675 / C91 / Nm57)).